A 507-amino-acid chain; its full sequence is ATP synthase subunit alpha, chloroplastic (507 aa).

170 to 177 (GDRQTGKT) contacts ATP.

It belongs to the ATPase alpha/beta chains family. In terms of assembly, F-type ATPases have 2 components, CF(1) - the catalytic core - and CF(0) - the membrane proton channel. CF(1) has five subunits: alpha(3), beta(3), gamma(1), delta(1), epsilon(1). CF(0) has four main subunits: a, b, b' and c.

The protein resides in the plastid. It is found in the chloroplast thylakoid membrane. It carries out the reaction ATP + H2O + 4 H(+)(in) = ADP + phosphate + 5 H(+)(out). Produces ATP from ADP in the presence of a proton gradient across the membrane. The alpha chain is a regulatory subunit. This Gossypium hirsutum (Upland cotton) protein is ATP synthase subunit alpha, chloroplastic.